Here is a 231-residue protein sequence, read N- to C-terminus: ATP phosphoribosyltransferase (231 aa).

It belongs to the ATP phosphoribosyltransferase family. Short subfamily. Heteromultimer composed of HisG and HisZ subunits.

The protein localises to the cytoplasm. It carries out the reaction 1-(5-phospho-beta-D-ribosyl)-ATP + diphosphate = 5-phospho-alpha-D-ribose 1-diphosphate + ATP. The protein operates within amino-acid biosynthesis; L-histidine biosynthesis; L-histidine from 5-phospho-alpha-D-ribose 1-diphosphate: step 1/9. Functionally, catalyzes the condensation of ATP and 5-phosphoribose 1-diphosphate to form N'-(5'-phosphoribosyl)-ATP (PR-ATP). Has a crucial role in the pathway because the rate of histidine biosynthesis seems to be controlled primarily by regulation of HisG enzymatic activity. This is ATP phosphoribosyltransferase from Psychrobacter arcticus (strain DSM 17307 / VKM B-2377 / 273-4).